A 186-amino-acid polypeptide reads, in one-letter code: Temperature-induced lipocalin-1 (186 aa).

The HPR (Hydrophobic proline-rich) signature appears at 90–97; it reads PPFLPIIP. The tract at residues 154–174 is disordered; the sequence is KLHKTPQSDTPPESNTAPEDS. Over residues 158 to 171 the composition is skewed to polar residues; the sequence is TPQSDTPPESNTAP.

The protein belongs to the calycin superfamily. Lipocalin family. In terms of tissue distribution, expressed ubiquitously at similar levels, except in dry seeds (at protein level). Present in seeds.

Its subcellular location is the cell membrane. It is found in the cytoplasm. The protein localises to the plastid. It localises to the chloroplast membrane. Involved in basal (BT) and acquired thermotolerance (AT), probably by preventing plasma membrane lipids peroxidation induced by severe heat-shock (HS). Lipocalin that confers protection against oxidative stress caused by heat, freezing, paraquat and light. Confers resistance to high salt (NaCl) levels, probably by protecting chloroplasts from ion toxicity via ion homeostasis maintenance. Required for seed longevity by ensuring polyunsaturated lipids integrity. This Arabidopsis thaliana (Mouse-ear cress) protein is Temperature-induced lipocalin-1.